A 582-amino-acid chain; its full sequence is Protein NUCLEAR FUSION DEFECTIVE 4 (582 aa).

The segment at 1 to 20 (MRPRIRDVSDKLRPNRASFD) is disordered. 8 consecutive transmembrane segments (helical) span residues 46–66 (VLVAAIWIQASTGTNFDFSAY), 100–120 (IALGYFPLSVVLFAAAAMGFV), 132–152 (IITLPYSLVFLCCLLAGLSIC), 172–192 (LALSLTVSFNGISAALYSLAF), 202–222 (LYLLLNSLVPLVVSFAALYPV), 243–263 (VFTILNVLAVITSFHLLLSSS), 270–290 (LNFIGAVVLLVFPLCAPLLVY), and 358–378 (LEFWLYYIAYFCGGTIGLVYS). Asn391 is a glycosylation site (N-linked (GlcNAc...) asparagine). Helical transmembrane passes span 395–412 (LVTIYSSFSFFGRLLSAA), 425–445 (TGWFAIALLPTPIAFFLLAVS), 458–478 (LIGLSSGFIFAAAVSITSDLF), 489–509 (ILITNIPIGSLLYGYIAASIY), and 536–556 (TFVFWGCLSILGVVSSLSLYI).

The protein resides in the membrane. Required for karyogamy during female gametophyte development, when the two polar nuclei fuse to form the diploid central cell nucleus. This Arabidopsis thaliana (Mouse-ear cress) protein is Protein NUCLEAR FUSION DEFECTIVE 4.